The chain runs to 1171 residues: ATP-dependent helicase/deoxyribonuclease subunit B (1171 aa).

This sequence belongs to the helicase family. AddB/RexB type 2 subfamily. Heterodimer of AddA and RexB. The cofactor is Mg(2+).

Its function is as follows. The heterodimer acts as both an ATP-dependent DNA helicase and an ATP-dependent, dual-direction single-stranded exonuclease. Recognizes the chi site generating a DNA molecule suitable for the initiation of homologous recombination. This subunit has 5' -&gt; 3' nuclease activity but not helicase activity. The sequence is that of ATP-dependent helicase/deoxyribonuclease subunit B from Leuconostoc citreum (strain KM20).